The chain runs to 124 residues: uncharacterized protein (124 aa).

The first 23 residues, methionine 1 to alanine 23, serve as a signal peptide directing secretion.

The protein belongs to the cytochrome b562 family.

This is an uncharacterized protein from Pasteurella multocida (strain Pm70).